Consider the following 323-residue polypeptide: Delta-aminolevulinic acid dehydratase (323 aa).

Cysteine 118, cysteine 120, and cysteine 128 together coordinate Zn(2+). Lysine 195 serves as the catalytic Schiff-base intermediate with substrate. Residues arginine 205 and arginine 217 each contribute to the 5-aminolevulinate site. Glutamate 233 contacts Mg(2+). Lysine 248 serves as the catalytic Schiff-base intermediate with substrate. Residues serine 274 and tyrosine 313 each coordinate 5-aminolevulinate.

Belongs to the ALAD family. Homooctamer. Requires Zn(2+) as cofactor.

The enzyme catalyses 2 5-aminolevulinate = porphobilinogen + 2 H2O + H(+). It functions in the pathway porphyrin-containing compound metabolism; protoporphyrin-IX biosynthesis; coproporphyrinogen-III from 5-aminolevulinate: step 1/4. Functionally, catalyzes an early step in the biosynthesis of tetrapyrroles. Binds two molecules of 5-aminolevulinate per subunit, each at a distinct site, and catalyzes their condensation to form porphobilinogen. The polypeptide is Delta-aminolevulinic acid dehydratase (hemB) (Staphylococcus aureus).